A 713-amino-acid polypeptide reads, in one-letter code: Transcription activator of gluconeogenesis CPC735_053490 (713 aa).

Residues 1-70 (MTANAINGPV…NAKDPLRPRR (70 aa)) form a disordered region. Residues 19–56 (GDNNKSADTTMADQGTRPESQPQGQNNGAKPQNGQTKP) are compositionally biased toward polar residues. The zn(2)-C6 fungal-type DNA-binding region spans 77 to 105 (CFACQRAHLTCGDERPCQRCIKRGIQNAC). Positions 145–159 (PLTRNGSNSKTNFYP) are enriched in polar residues. Disordered stretches follow at residues 145 to 229 (PLTR…ASGQ), 274 to 318 (GAGE…LFGD), 541 to 564 (GGSS…GMDI), and 623 to 665 (GTTS…QRKW). The segment covering 160-171 (QQQSSFNNFYQN) has biased composition (low complexity). Residues 191-212 (FPSQSPVSPTFNMTANPAASGN) are compositionally biased toward polar residues. A compositionally biased stretch (low complexity) spans 213–229 (QGLPSSLSASNSNASGQ). Polar residues-rich tracts occupy residues 295–312 (SGTY…TGQP), 541–558 (GGSS…SFTP), and 649–659 (GASNGQSQHSL).

This sequence belongs to the ERT1/acuK family.

The protein resides in the nucleus. Functionally, transcription factor which regulates nonfermentable carbon utilization. Activator of gluconeogenetic genes. This Coccidioides posadasii (strain C735) (Valley fever fungus) protein is Transcription activator of gluconeogenesis CPC735_053490.